The chain runs to 298 residues: MNIRIGTRGSVLALAQTLEVTNLLNRYFPEINIQVVKIKTSGDINNKVPINTIGGKGLFIKEIEEALLIGKVDLAVHSVKDIPAFYCDGLIIPCVLKRSSPYDVFVSSKYQSIKSLPINATVGTSSIRRKVQLNYLRPDLQVIPVRGNIDTRILKSDIGEFDGIVLAEAGLIRINKCNVIKEVLDSKIMLSAVGQGAICVQCRADDYNIINKIKVLNCHKSYVCVIAERSFLKTINGSCDTPLAALAQYVDSDTIYMSCMLSNEKEMVFSDCYFKECNAEESGIDMGKKLINELYGSC.

At C239 the chain carries S-(dipyrrolylmethanemethyl)cysteine.

It belongs to the HMBS family. In terms of assembly, monomer. Dipyrromethane is required as a cofactor.

It carries out the reaction 4 porphobilinogen + H2O = hydroxymethylbilane + 4 NH4(+). The protein operates within porphyrin-containing compound metabolism; protoporphyrin-IX biosynthesis; coproporphyrinogen-III from 5-aminolevulinate: step 2/4. Tetrapolymerization of the monopyrrole PBG into the hydroxymethylbilane pre-uroporphyrinogen in several discrete steps. In Ehrlichia canis (strain Jake), this protein is Porphobilinogen deaminase.